The primary structure comprises 106 residues: Large ribosomal subunit protein eL42 (106 aa).

This sequence belongs to the eukaryotic ribosomal protein eL42 family.

The protein is Large ribosomal subunit protein eL42 (RPL44) of Meyerozyma guilliermondii (strain ATCC 6260 / CBS 566 / DSM 6381 / JCM 1539 / NBRC 10279 / NRRL Y-324) (Yeast).